We begin with the raw amino-acid sequence, 346 residues long: Calcium homeostasis modulator protein 1 (346 aa).

Residues Met-1–Asn-21 are Cytoplasmic-facing. Positions Gln-10–Ala-37 are central pore. Residues Gly-22–Ala-37 traverse the membrane as a helical segment. At Phe-38–Asn-49 the chain is on the extracellular side. 2 disulfide bridges follow: Cys-42-Cys-127 and Cys-44-Cys-161. Residues Ala-50–Asn-72 traverse the membrane as a helical segment. Residues Val-63–Val-70 are phospholipid-binding. Over Asn-73–Met-99 the chain is Cytoplasmic. A helical membrane pass occupies residues Phe-100–Phe-125. Cys-101 carries the S-palmitoyl cysteine lipid modification. The tract at residues Gln-105–Val-117 is phospholipid-binding. Over Leu-126–Leu-180 the chain is Extracellular. Residue Asn-140 is glycosylated (N-linked (GlcNAc...) asparagine). Residues Arg-181–Arg-206 form a helical membrane-spanning segment. Positions Val-192–Val-202 are phospholipid-binding. The Cytoplasmic portion of the chain corresponds to Pro-207–Val-346. The S-palmitoyl cysteine moiety is linked to residue Cys-208. The tract at residues Leu-313 to Val-346 is disordered.

Belongs to the CALHM family. Oligomerizes to form hexamers and octamers. Does not form gap junctions. Associates with CALHM3 as a pore-forming subunit in a hetero-hexameric channel complex. N-glycosylated. Assembly with CALHM3 is associated with N-glycan remodeling and formation of hybrid complex- and high mannose-type glycochains. This N-glycan processing regulates channel trafficking and gating kinetics. In terms of processing, palmitoylated by ZDHHC3, ZDHHC20 and possibly ZDHHC7. Palmitoylation regulates voltage-dependent gating of the channel by shifting it toward more depolarized potentials. As to expression, predominantly expressed in adult brain. Detected also in retinoic acid-differentiated SH-SY5Y cells. Specifically expressed in circumvallate taste bud cells.

It localises to the cell membrane. It is found in the endoplasmic reticulum membrane. Its subcellular location is the basolateral cell membrane. It carries out the reaction ATP(in) = ATP(out). The enzyme catalyses Ca(2+)(in) = Ca(2+)(out). The catalysed reaction is Mg(2+)(in) = Mg(2+)(out). It catalyses the reaction Na(+)(in) = Na(+)(out). It carries out the reaction K(+)(in) = K(+)(out). The enzyme catalyses Li(+)(in) = Li(+)(out). The catalysed reaction is Rb(+)(in) = Rb(+)(out). It catalyses the reaction Cs(+)(in) = Cs(+)(out). It carries out the reaction chloride(in) = chloride(out). Regulated by membrane voltage and extracellular Ca(2+). Inhibited by Gd(3+), ruthenium red, and Zn(2+) and partially inhibited by 2-aminoethoxydiphenyl borate. Pore-forming subunit of gustatory voltage-gated ion channels required for sensory perception of sweet, bitter and umami tastes. With CALHM3 forms a fast-activating voltage-gated ATP-release channel in type II taste bud cells, ATP acting as a neurotransmitter to activate afferent neural gustatory pathways. Acts both as a voltage-gated and calcium-activated ion channel: mediates neuronal excitability in response to membrane depolarization and low extracellular Ca(2+) concentration. Has poor ion selectivity and forms a wide pore (around 14 Angstroms) that mediates permeation of small ions including Ca(2+), Na(+), K(+) and Cl(-), as well as larger ions such as ATP(4-). Mediates Ca(2+) influx and downstream activation of the ERK1 and ERK2 cascade in neurons. Triggers endoplasmic reticulum stress by reducing the Ca(2+) content of the endoplasmic reticulum. May indirectly control amyloid precursor protein (APP) proteolysis and aggregated amyloid-beta (Abeta) peptides levels in a Ca(2+)-dependent manner. The sequence is that of Calcium homeostasis modulator protein 1 from Homo sapiens (Human).